Here is a 343-residue protein sequence, read N- to C-terminus: MTITPQEALQRTIEHREIFHDEMLHLMRLIMRGDMSPVMAAAIITGLRVKKETIGEIAAAATVMREFANHVEVQDNSNFVDIVGTGGDGSHTFNISTASMFIAAAAGAKVAKHGNRGVSSKSGSADVLDALGVNIDLQPDQVAASIAETGMGFMFAPNHHPAMKNIAAVRRELGVRTIFNILGPLTNPAGAPNQLMGVFHPDLVGIQVRVMQRLGAQHVLVVYGKDGMDEVSLGAATLVGELRDGKVHEYEIHPEDFGLQMVSNRTLKVENAEESRTMLLGALDNQPGVAREIVTLNAGTALYAANIAESIADGIQLAREAIASGKARAKVDELVRFTQQFKR.

5-phospho-alpha-D-ribose 1-diphosphate contacts are provided by residues Gly84, 87–88 (GD), Thr92, 94–97 (NIST), 112–120 (KHGNRGVSS), and Ser124. Residue Gly84 coordinates anthranilate. Ser96 contributes to the Mg(2+) binding site. Position 115 (Asn115) interacts with anthranilate. Arg170 is a binding site for anthranilate. Asp229 and Glu230 together coordinate Mg(2+).

Belongs to the anthranilate phosphoribosyltransferase family. In terms of assembly, homodimer. Mg(2+) is required as a cofactor.

The enzyme catalyses N-(5-phospho-beta-D-ribosyl)anthranilate + diphosphate = 5-phospho-alpha-D-ribose 1-diphosphate + anthranilate. It functions in the pathway amino-acid biosynthesis; L-tryptophan biosynthesis; L-tryptophan from chorismate: step 2/5. Its function is as follows. Catalyzes the transfer of the phosphoribosyl group of 5-phosphorylribose-1-pyrophosphate (PRPP) to anthranilate to yield N-(5'-phosphoribosyl)-anthranilate (PRA). This Burkholderia ambifaria (strain ATCC BAA-244 / DSM 16087 / CCUG 44356 / LMG 19182 / AMMD) (Burkholderia cepacia (strain AMMD)) protein is Anthranilate phosphoribosyltransferase.